The sequence spans 462 residues: ATP synthase subunit beta (462 aa).

151-158 contacts ATP; sequence GGAGVGKT.

The protein belongs to the ATPase alpha/beta chains family. In terms of assembly, F-type ATPases have 2 components, CF(1) - the catalytic core - and CF(0) - the membrane proton channel. CF(1) has five subunits: alpha(3), beta(3), gamma(1), delta(1), epsilon(1). CF(0) has three main subunits: a(1), b(2) and c(9-12). The alpha and beta chains form an alternating ring which encloses part of the gamma chain. CF(1) is attached to CF(0) by a central stalk formed by the gamma and epsilon chains, while a peripheral stalk is formed by the delta and b chains.

It localises to the cell inner membrane. It catalyses the reaction ATP + H2O + 4 H(+)(in) = ADP + phosphate + 5 H(+)(out). Its function is as follows. Produces ATP from ADP in the presence of a proton gradient across the membrane. The catalytic sites are hosted primarily by the beta subunits. This chain is ATP synthase subunit beta, found in Chlorobium limicola.